Consider the following 134-residue polypeptide: B3 domain-containing protein At1g16640 (134 aa).

The TF-B3 DNA-binding region spans 7–100 (VQFMKPFISE…TFYVIIYGHN (94 aa)).

The protein localises to the nucleus. The polypeptide is B3 domain-containing protein At1g16640 (Arabidopsis thaliana (Mouse-ear cress)).